Reading from the N-terminus, the 131-residue chain is Colicin-N immunity protein (131 aa).

Transmembrane regions (helical) follow at residues 66–84 (ILTPFTILYISMIYCFLLT) and 104–124 (VFVFFLYNTIYWDIYIHIFVL).

The protein resides in the cell membrane. In Escherichia coli, this protein is Colicin-N immunity protein (cni).